Here is a 71-residue protein sequence, read N- to C-terminus: Small ribosomal subunit protein bS18 (71 aa).

Belongs to the bacterial ribosomal protein bS18 family. As to quaternary structure, part of the 30S ribosomal subunit. Forms a tight heterodimer with protein bS6.

Binds as a heterodimer with protein bS6 to the central domain of the 16S rRNA, where it helps stabilize the platform of the 30S subunit. The polypeptide is Small ribosomal subunit protein bS18 (Synechocystis sp. (strain ATCC 27184 / PCC 6803 / Kazusa)).